Consider the following 431-residue polypeptide: Glucose-1-phosphate adenylyltransferase (431 aa).

Position 39 (K39) interacts with beta-D-fructose 1,6-bisphosphate. The AMP site is built by R40, H46, and R52. Alpha-D-glucose 1-phosphate is bound by residues Y114, G179, 194-195, and S212; that span reads EK. AMP contacts are provided by E370 and R386. Beta-D-fructose 1,6-bisphosphate-binding positions include 419 to 423 and 429 to 431; these read REMLR and QER.

This sequence belongs to the bacterial/plant glucose-1-phosphate adenylyltransferase family. Homotetramer.

The enzyme catalyses alpha-D-glucose 1-phosphate + ATP + H(+) = ADP-alpha-D-glucose + diphosphate. It participates in glycan biosynthesis; glycogen biosynthesis. With respect to regulation, allosterically activated by fructose-1,6-bisphosphate (F16BP) and inhibited by AMP. In terms of biological role, involved in the biosynthesis of ADP-glucose, a building block required for the elongation reactions to produce glycogen. Catalyzes the reaction between ATP and alpha-D-glucose 1-phosphate (G1P) to produce pyrophosphate and ADP-Glc. The chain is Glucose-1-phosphate adenylyltransferase from Salmonella typhi.